A 492-amino-acid chain; its full sequence is Sestrin-1 (492 aa).

Positions 71-252 (FADSFAALGR…ICDITNGNHS (182 aa)) are N-terminal domain; may mediate the alkylhydroperoxide reductase activity. Cys-130 acts as the Cysteine sulfenic acid (-SOH) intermediate in catalysis. A phosphoserine mark is found at Ser-293 and Ser-314. Residues 321-492 (PARDVSRHFE…ALRAITRYMT (172 aa)) form a C-terminal domain; mediates TORC1 regulation region. Residues 386–389 (TYNT), Thr-398, and Glu-463 contribute to the L-leucine site.

It belongs to the sestrin family. Interacts with the GATOR2 complex which is composed of MIOS, SEC13, SEH1L, WDR24 and WDR59; the interaction is negatively regulated by leucine. Interacts with RRAGA, RRAGB, RRAGC and RRAGD; may function as a guanine nucleotide dissociation inhibitor for RRAGs and regulate them. Interacts with KEAP1, RBX1 and SQSTM1; in the SQSTM1-dependent autophagic degradation of KEAP1. May interact with PRDX1. Highly expressed in heart and also detected in liver and skeletal muscles (at protein level).

Its subcellular location is the nucleus. The protein resides in the cytoplasm. The enzyme catalyses a hydroperoxide + L-cysteinyl-[protein] = S-hydroxy-L-cysteinyl-[protein] + an alcohol. In terms of biological role, functions as an intracellular leucine sensor that negatively regulates the TORC1 signaling pathway through the GATOR complex. In absence of leucine, binds the GATOR subcomplex GATOR2 and prevents TORC1 signaling. Binding of leucine to SESN2 disrupts its interaction with GATOR2 thereby activating the TORC1 signaling pathway. This stress-inducible metabolic regulator may also play a role in protection against oxidative and genotoxic stresses. May positively regulate the transcription by NFE2L2 of genes involved in the response to oxidative stress by facilitating the SQSTM1-mediated autophagic degradation of KEAP1. Moreover, may prevent the accumulation of reactive oxygen species (ROS) through the alkylhydroperoxide reductase activity born by the N-terminal domain of the protein. Was originally reported to contribute to oxidative stress resistance by reducing PRDX1. However, this could not be confirmed. This is Sestrin-1 from Mus musculus (Mouse).